Consider the following 101-residue polypeptide: Small ribosomal subunit protein uS14 (101 aa).

This sequence belongs to the universal ribosomal protein uS14 family. Part of the 30S ribosomal subunit. Contacts proteins S3 and S10.

Binds 16S rRNA, required for the assembly of 30S particles and may also be responsible for determining the conformation of the 16S rRNA at the A site. The sequence is that of Small ribosomal subunit protein uS14 from Chelativorans sp. (strain BNC1).